Here is a 186-residue protein sequence, read N- to C-terminus: MALNLKINRQIRAPRVRVIGSSGEQLGILSIKEALDLAREADLDLVEVASNSEPPVCKIMDYGKYRYDVTKKEKDSKKAQHQVRVKEVKLKPNIDDNDFLTKVKQARAFIEKGNKVKVSCMFRGRELAYPEHGHKVVQRMCQGLEDVGFVESEPKLNGRSLICVIAPGTLKTKKKQEKVHAQDEKQ.

Belongs to the IF-3 family. Monomer.

It localises to the cytoplasm. Functionally, IF-3 binds to the 30S ribosomal subunit and shifts the equilibrium between 70S ribosomes and their 50S and 30S subunits in favor of the free subunits, thus enhancing the availability of 30S subunits on which protein synthesis initiation begins. This Chlamydia muridarum (strain MoPn / Nigg) protein is Translation initiation factor IF-3.